Here is a 448-residue protein sequence, read N- to C-terminus: Probable glycine dehydrogenase (decarboxylating) subunit 1 (448 aa).

Belongs to the GcvP family. N-terminal subunit subfamily. As to quaternary structure, the glycine cleavage system is composed of four proteins: P, T, L and H. In this organism, the P 'protein' is a heterodimer of two subunits.

It catalyses the reaction N(6)-[(R)-lipoyl]-L-lysyl-[glycine-cleavage complex H protein] + glycine + H(+) = N(6)-[(R)-S(8)-aminomethyldihydrolipoyl]-L-lysyl-[glycine-cleavage complex H protein] + CO2. In terms of biological role, the glycine cleavage system catalyzes the degradation of glycine. The P protein binds the alpha-amino group of glycine through its pyridoxal phosphate cofactor; CO(2) is released and the remaining methylamine moiety is then transferred to the lipoamide cofactor of the H protein. The polypeptide is Probable glycine dehydrogenase (decarboxylating) subunit 1 (Listeria monocytogenes serotype 4b (strain F2365)).